Reading from the N-terminus, the 1020-residue chain is Sodium/potassium-transporting ATPase subunit alpha-2 (1020 aa).

The propeptide occupies 1 to 5 (MGRGA). The tract at residues 1–31 (MGRGAGREYSPAATTAENGGGKKKQKEKELD) is disordered. The Cytoplasmic portion of the chain corresponds to 6 to 85 (GREYSPAATT…NALTPPPTTP (80 aa)). A Phosphoserine modification is found at Ser-10. The interval 80 to 82 (PPP) is interaction with phosphoinositide-3 kinase. Residues 86 to 106 (EWVKFCRQLFGGFSILLWIGA) traverse the membrane as a helical segment. Residues 107–129 (ILCFLAYGIQAAMEDEPSNDNLY) are Extracellular-facing. The chain crosses the membrane as a helical span at residues 130-150 (LGVVLAAVVIVTGCFSYYQEA). Residues 151-286 (KSSKIMDSFK…VGRTPIAMEI (136 aa)) lie on the Cytoplasmic side of the membrane. Residues 212-227 (DNSSLTGESEPQTRSP) show a composition bias toward polar residues. The disordered stretch occupies residues 212-231 (DNSSLTGESEPQTRSPEFTH). The helical transmembrane segment at 287 to 306 (EHFIQLITGVAVFLGVSFFV) threads the bilayer. Over 307–318 (LSLILGYSWLEA) the chain is Extracellular. The helical transmembrane segment at 319-336 (VIFLIGIIVANVPEGLLA) threads the bilayer. The Cytoplasmic portion of the chain corresponds to 337–769 (TVTVCLTLTA…EEGRLIFDNL (433 aa)). Asp-374 acts as the 4-aspartylphosphate intermediate in catalysis. Ser-439, Ser-450, and Ser-559 each carry phosphoserine. Residue Thr-570 is modified to Phosphothreonine. Ser-587 and Ser-672 each carry phosphoserine. Positions 714 and 718 each coordinate Mg(2+). A helical membrane pass occupies residues 770-789 (KKSIAYTLTSNIPEITPFLL). The Extracellular portion of the chain corresponds to 790 to 799 (FIIANIPLPL). Residues 800–820 (GTVTILCIDLGTDMVPAISLA) traverse the membrane as a helical segment. Residues 821-840 (YEAAESDIMKRQPRNPQTDK) are Cytoplasmic-facing. At Ser-826 the chain carries Phosphoserine. The helical transmembrane segment at 841–863 (LVNERLISMAYGQIGMIQALGGF) threads the bilayer. Residues 864–915 (FTYFVILAENGFLPSRLLGIRLDWDDRSMNDLEDSYGQEWTYEQRKVVEFTC) lie on the Extracellular side of the membrane. A helical membrane pass occupies residues 916-935 (HTAFFASIVVVQWADLIICK). At 936–948 (TRRNSVFQQGMKN) the chain is on the cytoplasmic side. Phosphoserine; by PKA is present on Ser-940. The chain crosses the membrane as a helical span at residues 949 to 967 (KILIFGLLEETALAAFLSY). The Extracellular portion of the chain corresponds to 968-982 (CPGMGVALRMYPLKV). Residues 983-1003 (TWWFCAFPYSLLIFIYDEVRK) traverse the membrane as a helical segment. Topologically, residues 1004–1020 (LILRRYPGGWVEKETYY) are cytoplasmic.

Belongs to the cation transport ATPase (P-type) (TC 3.A.3) family. Type IIC subfamily. The sodium/potassium-transporting ATPase is composed of a catalytic alpha subunit, an auxiliary non-catalytic beta subunit and an additional regulatory subunit. Interacts with regulatory subunit FXYD1.

Its subcellular location is the membrane. The protein localises to the cell membrane. The catalysed reaction is K(+)(out) + Na(+)(in) + ATP + H2O = K(+)(in) + Na(+)(out) + ADP + phosphate + H(+). This is the catalytic component of the active enzyme, which catalyzes the hydrolysis of ATP coupled with the exchange of sodium and potassium ions across the plasma membrane. This action creates the electrochemical gradient of sodium and potassium, providing the energy for active transport of various nutrients. The chain is Sodium/potassium-transporting ATPase subunit alpha-2 (ATP1A2) from Sus scrofa (Pig).